The following is a 183-amino-acid chain: Ras-related protein Rap-2a (183 aa).

A GTP-binding site is contributed by 10 to 17 (GSGGVGKS). Positions 32–40 (YDPTIEDFY) match the Effector region motif. GTP is bound by residues 57-61 (DTAGT) and 116-119 (NKVD). S-palmitoyl cysteine attachment occurs at residues cysteine 176 and cysteine 177. Position 180 is a cysteine methyl ester (cysteine 180). The S-farnesyl cysteine moiety is linked to residue cysteine 180. The propeptide at 181 to 183 (NIQ) is removed in mature form.

It belongs to the small GTPase superfamily. Ras family. Interacts with PLCE1. Interacts with ARHGAP29, SGSM1, SGSM2 and SGSM3. Interacts (GTP-bound form preferentially) with MAP4K4. Interacts with MINK1. Interacts with cytoskeletal actin. Interacts (GTP-bound form) with RUNDC3A. Interacts (GTP-bound form preferentially) with TNIK (via the CNH domain); the interaction is direct and recruits RAP2A to the E3 ubiquitin ligase NEDD4. Interacts with RGS14; the interaction is GTP-dependent. In terms of processing, ubiquitinated; undergoes 'Lys-63' monoubiquitination and diubiquitination by NEDD4. Multiple lysine residues are probably modified. Ubiquitination requires TNIK, prevents interaction with effectors and inactivates RAP2A. Ubiquitination by the ECS(RAB40B) complex leads to RAP2A localization to lamellipodia plasma membrane, activation, and regulation of sorting at early endosomes for recycling to the lamellipodia plasma membrane. Post-translationally, palmitoylated. Palmitoylation is required for association with recycling endosome membranes and activation of TNIK. Expressed in granular layer of the cerebellum, forebrain, striatum, layer V of the cortex, olfactory cortex, tubercules, subthalamic and hippocampus, particularly in the CA2 region, to a lesser extent in the CA1 region and the external layer of the dentate gyrus. Expressed in neurons.

The protein localises to the midbody. It is found in the cell projection. The protein resides in the lamellipodium membrane. It localises to the golgi apparatus. Its subcellular location is the recycling endosome membrane. The protein localises to the lysosome. It carries out the reaction GTP + H2O = GDP + phosphate + H(+). Its activity is regulated as follows. Activated by the guanine nucleotide-exchange factors RAPGEF3 and RAPGEF4 in a cAMP-dependent manner. Nucleotide exchange is also specifically stimulated by RAPGEF5, RASGEF1A and RASGEF1B. In terms of biological role, small GTP-binding protein which cycles between a GDP-bound inactive and a GTP-bound active form. In its active form interacts with and regulates several effectors including MAP4K4, MINK1 and TNIK. Part of a signaling complex composed of NEDD4, RAP2A and TNIK which regulates neuronal dendrite extension and arborization during development. More generally, it is part of several signaling cascades and may regulate cytoskeletal rearrangements, cell migration, cell adhesion and cell spreading. This chain is Ras-related protein Rap-2a, found in Mus musculus (Mouse).